The primary structure comprises 144 residues: Putative pre-16S rRNA nuclease (144 aa).

It belongs to the YqgF nuclease family.

Its subcellular location is the cytoplasm. In terms of biological role, could be a nuclease involved in processing of the 5'-end of pre-16S rRNA. The protein is Putative pre-16S rRNA nuclease of Mycoplasma mobile (strain ATCC 43663 / 163K / NCTC 11711) (Mesomycoplasma mobile).